The sequence spans 153 residues: MIEWQDLHHSELSVSQLYALLQLRCAVFVVEQNCPYQDIDGDDLTGDNRHILGWKNDELVAYARILKSDDDLEPVVIGRVIVSEALRGEKVGQQLMSKTLETCTHHWPDKPVYLGAQAHLQNFYQSFGFIPVTEVYEEDGIPHIGMAREVIQA.

An N-acetyltransferase domain is found at 7–151; the sequence is LHHSELSVSQ…PHIGMAREVI (145 aa).

Belongs to the UPF0039 (ElaA) family.

In Escherichia coli (strain K12), this protein is Protein ElaA (elaA).